Here is a 369-residue protein sequence, read N- to C-terminus: RING-H2 finger protein ATL47 (369 aa).

Residues 52 to 72 (IILFIIVLLSVIFFICSILHL) form a helical membrane-spanning segment. The RING-type; atypical zinc finger occupies 144–186 (CAVCLCEFSEDDKLRLLPNCSHAFHIDCIDTWLLSNSTCPLCR). Residues 332-355 (NNHPSETNLVVGGSSSSSSYVCSG) form a disordered region. The segment covering 341–355 (VVGGSSSSSSYVCSG) has biased composition (low complexity).

It belongs to the RING-type zinc finger family. ATL subfamily.

It localises to the membrane. The enzyme catalyses S-ubiquitinyl-[E2 ubiquitin-conjugating enzyme]-L-cysteine + [acceptor protein]-L-lysine = [E2 ubiquitin-conjugating enzyme]-L-cysteine + N(6)-ubiquitinyl-[acceptor protein]-L-lysine.. Its pathway is protein modification; protein ubiquitination. The protein is RING-H2 finger protein ATL47 (ATL47) of Arabidopsis thaliana (Mouse-ear cress).